A 156-amino-acid chain; its full sequence is Probable succinate transporter subunit YjjB (156 aa).

4 helical membrane-spanning segments follow: residues 7–27 (WALLQDMVLAAIPALGFAMVF), 54–74 (FGMNIELASLVASIMIGVIGI), 86–106 (VFTVAAVIPMFPGISAYTAMI), and 128–148 (FLKASFIVGALSIGLSLPGLW).

This sequence belongs to the ThrE exporter (TC 2.A.79) family. As to quaternary structure, the transporter is composed of YjjB and YjjP.

Its subcellular location is the cell inner membrane. Its function is as follows. Involved in succinate export with YjjP. Both proteins are required for export. The sequence is that of Probable succinate transporter subunit YjjB from Yersinia pseudotuberculosis serotype I (strain IP32953).